We begin with the raw amino-acid sequence, 1305 residues long: Serine protease EspC (1305 aa).

Positions methionine 1–alanine 53 are cleaved as a signal peptide. The Peptidase S6 domain maps to glutamine 55 to threonine 297. Catalysis depends on charge relay system residues histidine 125, aspartate 153, and serine 256. Residues aspartate 1039–phenylalanine 1305 enclose the Autotransporter domain.

In terms of processing, cleaved to release the mature protein from the outer membrane.

The protein localises to the periplasm. It is found in the secreted. Its subcellular location is the cell surface. It localises to the cell outer membrane. Inhibition of cytotoxic activity by phenylmethylsulfonyl fluoride. Serine protease with enterotoxic and cytotoxic activities. Cleaves fodrin, but does not cause its redistribution within epithelial cells. The exact role of EspC in EPEC pathogenesis is still unknown. The sequence is that of Serine protease EspC (espC) from Escherichia coli O127:H6 (strain E2348/69 / EPEC).